The primary structure comprises 298 residues: MEEFDSEDFSTSEEDEDYVPSGGEYSEDDINELVKEDEVDVEEETHIIKGTKRKAERFMPRKRKQGGLSLEEEDEEDAGRESGGSGSEEEDTATEQEEGTESEDARKKKEDELWASFLNDVGPKSKVPPSTPVKTGEETEETSSSNLVKAEEQEKPKETEKVKITKVFDFAGEEVRVTKEVDPTSKEAKSFFKQSEKEKPQPNVPSAVSSLPAGSGLKRSSGMSSLLGKIGAKKQKMSTLEKSKLDWENFKEEEGIAEELAIHNRGKEGYIERKAFLDRVDHRQFEIERDLRLSKMKP.

2 stretches are compositionally biased toward acidic residues: residues 1–18 and 25–43; these read MEEF…DEDY and YSED…DVEE. 2 disordered regions span residues 1-159 and 179-223; these read MEEF…PKET and KEVD…SSGM. Residues 49–65 are compositionally biased toward basic residues; it reads KGTKRKAERFMPRKRKQ. A phosphoserine mark is found at Ser82 and Ser85. Over residues 87-102 the composition is skewed to acidic residues; that stretch reads SEEEDTATEQEEGTES. The span at 103–112 shows a compositional bias: basic and acidic residues; sequence EDARKKKEDE. At Ser116 the chain carries Phosphoserine. Residues 124–134 are compositionally biased toward low complexity; that stretch reads KSKVPPSTPVK. Lys149 is covalently cross-linked (Glycyl lysine isopeptide (Lys-Gly) (interchain with G-Cter in SUMO2)). Basic and acidic residues-rich tracts occupy residues 149 to 159 and 179 to 200; these read KAEEQEKPKET and KEVD…KEKP. The hydrophilic stretch occupies residues 177-216; sequence VTKEVDPTSKEAKSFFKQSEKEKPQPNVPSAVSSLPAGSG. Ser215 carries the phosphoserine modification. A BCNT-C domain is found at 217–298; that stretch reads LKRSSGMSSL…RDLRLSKMKP (82 aa). Residue Lys218 is modified to N6-methyllysine.

It localises to the chromosome. The protein resides in the centromere. Its subcellular location is the kinetochore. May play a role during embryogenesis. The protein is Craniofacial development protein 1 (CFDP1) of Tragulus javanicus (Lesser Malay chevrotain).